A 291-amino-acid chain; its full sequence is Ribonuclease Z (291 aa).

Residues histidine 61, histidine 63, aspartate 65, histidine 66, histidine 133, aspartate 201, and histidine 257 each coordinate Zn(2+). Residue aspartate 65 is the Proton acceptor of the active site.

The protein belongs to the RNase Z family. As to quaternary structure, homodimer. Zn(2+) is required as a cofactor.

It carries out the reaction Endonucleolytic cleavage of RNA, removing extra 3' nucleotides from tRNA precursor, generating 3' termini of tRNAs. A 3'-hydroxy group is left at the tRNA terminus and a 5'-phosphoryl group is left at the trailer molecule.. Its function is as follows. Zinc phosphodiesterase, which displays some tRNA 3'-processing endonuclease activity. Probably involved in tRNA maturation, by removing a 3'-trailer from precursor tRNA. The polypeptide is Ribonuclease Z (Saccharolobus islandicus (strain Y.N.15.51 / Yellowstone #2) (Sulfolobus islandicus)).